A 137-amino-acid polypeptide reads, in one-letter code: Histone H2B (137 aa).

Over residues 1–10 (MPPKPADKKP) the composition is skewed to basic and acidic residues. The disordered stretch occupies residues 1-45 (MPPKPADKKPASKAPATASKAPEKKDAGKKTAASGDKKKRTKARK). An N6-acetyllysine; alternate mark is found at lysine 8 and lysine 9. Residues lysine 8 and lysine 9 each participate in a glycyl lysine isopeptide (Lys-Gly) (interchain with G-Cter in SUMO); alternate cross-link. Serine 12 carries the phosphoserine modification. At lysine 13 the chain carries N6-acetyllysine. Residue lysine 24 is modified to N6-acetyllysine; alternate. Lysine 24 is covalently cross-linked (Glycyl lysine isopeptide (Lys-Gly) (interchain with G-Cter in SUMO); alternate). Residue lysine 25 forms a Glycyl lysine isopeptide (Lys-Gly) (interchain with G-Cter in SUMO) linkage. Residue lysine 131 forms a Glycyl lysine isopeptide (Lys-Gly) (interchain with G-Cter in ubiquitin) linkage.

The protein belongs to the histone H2B family. As to quaternary structure, the nucleosome is a histone octamer containing two molecules each of H2A, H2B, H3 and H4 assembled in one H3-H4 heterotetramer and two H2A-H2B heterodimers. The octamer wraps approximately 147 bp of DNA. In terms of processing, monoubiquitinated by the ubc-2-bre-1 complex to form H2BK123ub1. H2BK123ub1 gives a specific tag for epigenetic transcriptional activation and is also prerequisite for H3K4me and H3K79me formation. H2BK123ub1 also modulates the formation of double-strand breaks during meiosis and is a prerequisite for DNA-damage checkpoint activation. Phosphorylated by ste-20 to form H2BS10ph during progression through meiotic prophase. May be correlated with chromosome condensation. Post-translationally, acetylated by gcn-5 to form H2BK11ac and H2BK16ac. H2BK16ac can also be formed by esa-1. Acetylation of N-terminal lysines and particularly formation of H2BK11acK16ac has a positive effect on transcription. In terms of processing, sumoylation to form H2BK6su or H2BK7su, and probably also H2BK16su or H2BK17su, occurs preferentially near the telomeres and represses gene transcription.

It localises to the nucleus. It is found in the chromosome. Functionally, core component of nucleosome. Nucleosomes wrap and compact DNA into chromatin, limiting DNA accessibility to the cellular machineries which require DNA as a template. Histones thereby play a central role in transcription regulation, DNA repair, DNA replication and chromosomal stability. DNA accessibility is regulated via a complex set of post-translational modifications of histones, also called histone code, and nucleosome remodeling. In Neurospora crassa (strain ATCC 24698 / 74-OR23-1A / CBS 708.71 / DSM 1257 / FGSC 987), this protein is Histone H2B (hh2b).